The primary structure comprises 565 residues: MSDTARISGGSFTSPPGRDVELNSFKEASQTRLYPYSSRKEEEGREDEQQRPEREEDTGALTGYKLVLVTVGLCFCIFCTSLDNTIVATAVPRITQQFHSLDDVGWYASAYLLTTCAVTLPFGRLYTFFPIKWVYLSALFVFELGSFICGITPSSLGLILGRAVAGLGGGGLFSGSLLIITQCVPLRRRPAFSGFIMSIFAVASVIAPLMGGAFTDHISWRWCFYINLPFGLVSAVVIFFTFQTTKPVVQASLREKAAGLDPLGTATFLPAIVCLLLATQWGGAQYPWGDGRIIALFTLFGVLLACFVGLQLWARERATLPPRLLRGRNIWGSALYGFCLNGAMFTFVYYLPIWFQAVQGTSATESGIRNLPLVISNVIFAIISGVLVSATGYFGPFMLLSAAMASIAAGLLSMLHPSSGAGEWIGYQVLLGSSIGMGFQLPVFVVQTTLASTDIPTATALMTFIQLLGGAIFVSVAQNVFRNQLAADIRAALPMLDPKAVINAGPTSLRAMYSGETLTTLVAMYNDAVVHTFYLAIGLAAASFLAATVIQWRPSPKSISHPDSS.

Over residues 1-14 the composition is skewed to polar residues; sequence MSDTARISGGSFTS. The disordered stretch occupies residues 1-57; that stretch reads MSDTARISGGSFTSPPGRDVELNSFKEASQTRLYPYSSRKEEEGREDEQQRPEREED. Over residues 38 to 54 the composition is skewed to basic and acidic residues; it reads SRKEEEGREDEQQRPER. Transmembrane regions (helical) follow at residues 59–79, 103–123, 128–148, 164–184, 194–214, 222–242, 257–277, 293–313, 335–355, 378–398, 399–419, 425–445, 457–477, and 530–550; these read GALTGYKLVLVTVGLCFCIFC, DVGWYASAYLLTTCAVTLPFG, FFPIKWVYLSALFVFELGSFI, VAGLGGGGLFSGSLLIITQCV, GFIMSIFAVASVIAPLMGGAF, WCFYINLPFGLVSAVVIFFTF, AAGLDPLGTATFLPAIVCLLL, IIALFTLFGVLLACFVGLQLW, LYGFCLNGAMFTFVYYLPIWF, VIFAIISGVLVSATGYFGPFM, LLSAAMASIAAGLLSMLHPSS, IGYQVLLGSSIGMGFQLPVFV, TATALMTFIQLLGGAIFVSVA, and VHTFYLAIGLAAASFLAATVI.

It belongs to the major facilitator superfamily. TCR/Tet family.

It is found in the cell membrane. In terms of biological role, efflux pump; part of the gene cluster that mediates the biosynthesis of aurasperone B, a dimeric gamma-naphthopyrone. The protein is Efflux pump aunC of Aspergillus niger (strain ATCC MYA-4892 / CBS 513.88 / FGSC A1513).